A 346-amino-acid chain; its full sequence is N-acetyl-gamma-glutamyl-phosphate reductase (346 aa).

Residue Cys-149 is part of the active site.

This sequence belongs to the NAGSA dehydrogenase family. Type 1 subfamily.

It localises to the cytoplasm. The catalysed reaction is N-acetyl-L-glutamate 5-semialdehyde + phosphate + NADP(+) = N-acetyl-L-glutamyl 5-phosphate + NADPH + H(+). The protein operates within amino-acid biosynthesis; L-arginine biosynthesis; N(2)-acetyl-L-ornithine from L-glutamate: step 3/4. In terms of biological role, catalyzes the NADPH-dependent reduction of N-acetyl-5-glutamyl phosphate to yield N-acetyl-L-glutamate 5-semialdehyde. In Geobacter metallireducens (strain ATCC 53774 / DSM 7210 / GS-15), this protein is N-acetyl-gamma-glutamyl-phosphate reductase.